Consider the following 453-residue polypeptide: GTPase Der (453 aa).

EngA-type G domains follow at residues 4-169 (PIVA…PPVT) and 177-352 (IKIA…EEHK). Residues 10 to 17 (GRPNVGKS), 57 to 61 (DTGGL), 120 to 123 (NKCE), 183 to 190 (GRPNVGKS), 230 to 234 (DTAGI), and 295 to 298 (NKWD) contribute to the GTP site. A KH-like domain is found at 353–438 (RRVSTSVINE…PIRLLWRSKK (86 aa)).

This sequence belongs to the TRAFAC class TrmE-Era-EngA-EngB-Septin-like GTPase superfamily. EngA (Der) GTPase family. As to quaternary structure, associates with the 50S ribosomal subunit.

Its function is as follows. GTPase that plays an essential role in the late steps of ribosome biogenesis. The polypeptide is GTPase Der (Nostoc sp. (strain PCC 7120 / SAG 25.82 / UTEX 2576)).